The chain runs to 629 residues: tRNA uridine 5-carboxymethylaminomethyl modification enzyme MnmG (629 aa).

FAD is bound by residues 13–18 (GGGHAG), V125, and S180. 273–287 (GPRYCPSIEDKVMRF) serves as a coordination point for NAD(+). Q370 serves as a coordination point for FAD.

Belongs to the MnmG family. Homodimer. Heterotetramer of two MnmE and two MnmG subunits. It depends on FAD as a cofactor.

It is found in the cytoplasm. Functionally, NAD-binding protein involved in the addition of a carboxymethylaminomethyl (cmnm) group at the wobble position (U34) of certain tRNAs, forming tRNA-cmnm(5)s(2)U34. The chain is tRNA uridine 5-carboxymethylaminomethyl modification enzyme MnmG from Cronobacter sakazakii (strain ATCC BAA-894) (Enterobacter sakazakii).